The sequence spans 735 residues: Lebercilin-like protein (735 aa).

Disordered stretches follow at residues 12–54 and 91–115; these read TEAH…NGSV and EKPL…RGQK. Positions 43–53 are enriched in low complexity; that stretch reads QSQNSQASNGS. The stretch at 205–335 forms a coiled coil; sequence TAKHQNEVKN…QQKLKEKDRE (131 aa). Disordered stretches follow at residues 356–379, 473–597, 632–657, and 685–735; these read YPKV…NMRH, SKEV…PRKH, KHRS…AGAR, and GRAG…KTVV. A compositionally biased stretch (basic and acidic residues) spans 487–525; sequence TPRRPKENKEDQEKRAIPAEAEPTAKESEAHKDAEDKAL. Over residues 528–541 the composition is skewed to low complexity; the sequence is AAGNAGDAGDAGDA. Basic and acidic residues-rich tracts occupy residues 542–553, 573–588, and 632–641; these read GNDREVVGEHKV, EVHG…EPGR, and KHRSEQELRL. Residues 689–707 show a composition bias toward polar residues; the sequence is SSDSEAVSKSPQTGPQASA.

This sequence belongs to the LCA5 family.

The sequence is that of Lebercilin-like protein from Mus musculus (Mouse).